Reading from the N-terminus, the 333-residue chain is Fructose-1,6-bisphosphatase class 1 1 (333 aa).

Residues Glu-81, Asp-100, Leu-102, and Asp-103 each contribute to the Mg(2+) site. Residues 103–106 (DGSS) and Asn-191 contribute to the substrate site. Glu-263 lines the Mg(2+) pocket.

Belongs to the FBPase class 1 family. In terms of assembly, homotetramer. Mg(2+) serves as cofactor.

It localises to the cytoplasm. It carries out the reaction beta-D-fructose 1,6-bisphosphate + H2O = beta-D-fructose 6-phosphate + phosphate. It functions in the pathway carbohydrate biosynthesis; Calvin cycle. The polypeptide is Fructose-1,6-bisphosphatase class 1 1 (Cereibacter sphaeroides (strain ATCC 17023 / DSM 158 / JCM 6121 / CCUG 31486 / LMG 2827 / NBRC 12203 / NCIMB 8253 / ATH 2.4.1.) (Rhodobacter sphaeroides)).